A 225-amino-acid chain; its full sequence is Ribonuclease 3 (225 aa).

Residues 7 to 129 form the RNase III domain; sequence IPRLCRTLGY…IIGAVYLDSD (123 aa). Glu-42 contributes to the Mg(2+) binding site. The active site involves Asp-46. Mg(2+) is bound by residues Asp-115 and Glu-118. Glu-118 is a catalytic residue. Positions 155 to 225 constitute a DRBM domain; that stretch reads DPKTLLQELL…AAQALELIKR (71 aa).

Belongs to the ribonuclease III family. As to quaternary structure, homodimer. Mg(2+) is required as a cofactor.

It localises to the cytoplasm. The catalysed reaction is Endonucleolytic cleavage to 5'-phosphomonoester.. Digests double-stranded RNA. Involved in the processing of primary rRNA transcript to yield the immediate precursors to the large and small rRNAs (23S and 16S). Processes some mRNAs, and tRNAs when they are encoded in the rRNA operon. Processes pre-crRNA and tracrRNA of type II CRISPR loci if present in the organism. This chain is Ribonuclease 3, found in Shewanella woodyi (strain ATCC 51908 / MS32).